The sequence spans 748 residues: Polyribonucleotide nucleotidyltransferase (748 aa).

2 residues coordinate Mg(2+): D487 and D493. The KH domain maps to P554–I613. The region spanning G623 to K691 is the S1 motif domain. A disordered region spans residues K691–N748. A compositionally biased stretch (low complexity) spans S699–K712. Positions D713–D722 are enriched in basic and acidic residues.

It belongs to the polyribonucleotide nucleotidyltransferase family. Requires Mg(2+) as cofactor.

It localises to the cytoplasm. The enzyme catalyses RNA(n+1) + phosphate = RNA(n) + a ribonucleoside 5'-diphosphate. Involved in mRNA degradation. Catalyzes the phosphorolysis of single-stranded polyribonucleotides processively in the 3'- to 5'-direction. In Rickettsia africae (strain ESF-5), this protein is Polyribonucleotide nucleotidyltransferase.